We begin with the raw amino-acid sequence, 137 residues long: Small ribosomal subunit protein eS19 (137 aa).

The protein belongs to the eukaryotic ribosomal protein eS19 family. Component of the small ribosomal subunit.

Its subcellular location is the cytoplasm. The protein is Small ribosomal subunit protein eS19 (RPS19) of Encephalitozoon cuniculi (strain GB-M1) (Microsporidian parasite).